A 474-amino-acid polypeptide reads, in one-letter code: MSKKLHIKTWGCQMNEYDSSKMADLLDEYQGYTLTDDATEADVLLLNTCSIREKAQEKVFHQLGRWKTLKDKKPGLIIGVGGCVASQEGKAIKDRAQCVDIIFGPQTLHRLPEMIDQVQRGEKVVIDVSFPEIEKFDRLPEPRADGPTAFVSIMEGCSKYCSFCVVPYTRGEEVSRPQDDIILEIAQLAEQGVREVNLLGQNVNAYRGATHDDQICTFAELLRLVASIDGIDRIRFTTSHPIEFTQDIIDVYEDTPELVSFLHLPVQSGSDRILTQMKRGHMAIEYKSIIRRLRKAREGIQISSDFIIGFPGESAEDFADTMKLIEDVAFDHSFSFIYSARPGTPAADLPDDVSDEEKKQRLAILQDRITQQAMRYSRQMLGTVQRILVEGPSVKNPMELRGRTENNRVVNFEAPHTHIGSFVDVEIVDVYTNSLRGIFIRGEAEMDLRRSLRPADILAKHKQDDVLGVTQFTP.

One can recognise an MTTase N-terminal domain in the interval 3–120; it reads KKLHIKTWGC…LPEMIDQVQR (118 aa). Cys-12, Cys-49, Cys-83, Cys-157, Cys-161, and Cys-164 together coordinate [4Fe-4S] cluster. The 233-residue stretch at 143–375 folds into the Radical SAM core domain; that stretch reads RADGPTAFVS…QDRITQQAMR (233 aa). A TRAM domain is found at 378–441; the sequence is RQMLGTVQRI…TNSLRGIFIR (64 aa).

This sequence belongs to the methylthiotransferase family. MiaB subfamily. Monomer. The cofactor is [4Fe-4S] cluster.

It is found in the cytoplasm. The catalysed reaction is N(6)-dimethylallyladenosine(37) in tRNA + (sulfur carrier)-SH + AH2 + 2 S-adenosyl-L-methionine = 2-methylsulfanyl-N(6)-dimethylallyladenosine(37) in tRNA + (sulfur carrier)-H + 5'-deoxyadenosine + L-methionine + A + S-adenosyl-L-homocysteine + 2 H(+). Functionally, catalyzes the methylthiolation of N6-(dimethylallyl)adenosine (i(6)A), leading to the formation of 2-methylthio-N6-(dimethylallyl)adenosine (ms(2)i(6)A) at position 37 in tRNAs that read codons beginning with uridine. The chain is tRNA-2-methylthio-N(6)-dimethylallyladenosine synthase from Shewanella denitrificans (strain OS217 / ATCC BAA-1090 / DSM 15013).